The chain runs to 318 residues: Beta-ketoacyl-[acyl-carrier-protein] synthase III (318 aa).

Active-site residues include C112 and H245. Positions 246–250 (QANLR) are ACP-binding. N275 is a catalytic residue.

The protein belongs to the thiolase-like superfamily. FabH family. In terms of assembly, homodimer.

The protein localises to the cytoplasm. It catalyses the reaction malonyl-[ACP] + acetyl-CoA + H(+) = 3-oxobutanoyl-[ACP] + CO2 + CoA. Its pathway is lipid metabolism; fatty acid biosynthesis. In terms of biological role, catalyzes the condensation reaction of fatty acid synthesis by the addition to an acyl acceptor of two carbons from malonyl-ACP. Catalyzes the first condensation reaction which initiates fatty acid synthesis and may therefore play a role in governing the total rate of fatty acid production. Possesses both acetoacetyl-ACP synthase and acetyl transacylase activities. Its substrate specificity determines the biosynthesis of branched-chain and/or straight-chain of fatty acids. The chain is Beta-ketoacyl-[acyl-carrier-protein] synthase III from Blochmanniella floridana.